The primary structure comprises 247 residues: ATP synthase subunit C lysine N-methyltransferase (247 aa).

Met1 is modified (N-acetylmethionine). The span at 1–12 (MERVGTPEEERQ) shows a compositional bias: basic and acidic residues. The disordered stretch occupies residues 1 to 25 (MERVGTPEEERQAGPVLPTSLESDS). The helical transmembrane segment at 34–54 (LITGVVGGALLTVYAVATPFI) threads the bilayer. A required for mitochondrial location region spans residues 51 to 85 (TPFITPALRKVCLPFVPATSKQVENVVRMLRHRRG). A disordered region spans residues 209–247 (QRGRGGRPNQEWVGQKNLSETAGLQASSSETRSKLLDVE). Positions 224-238 (KNLSETAGLQASSSE) are enriched in polar residues.

The protein belongs to the ANT/ATPSC lysine N-methyltransferase family. Ubiquitously expressed.

The protein localises to the mitochondrion membrane. The catalysed reaction is L-lysyl-[protein] + 3 S-adenosyl-L-methionine = N(6),N(6),N(6)-trimethyl-L-lysyl-[protein] + 3 S-adenosyl-L-homocysteine + 3 H(+). Mitochondrial protein-lysine N-methyltransferase that trimethylates ATP synthase subunit C, ATP5MC1 and ATP5MC2. Trimethylation is required for proper incorporation of the C subunit into the ATP synthase complex and mitochondrial respiration. Promotes chronic pain. Involved in persistent inflammatory and neuropathic pain: methyltransferase activity in the mitochondria of sensory neurons promotes chronic pain via a pathway that depends on the production of reactive oxygen species (ROS) and on the engagement of spinal cord microglia. The chain is ATP synthase subunit C lysine N-methyltransferase from Mus musculus (Mouse).